The chain runs to 181 residues: Large ribosomal subunit protein uL6 (181 aa).

This sequence belongs to the universal ribosomal protein uL6 family. As to quaternary structure, part of the 50S ribosomal subunit.

In terms of biological role, this protein binds to the 23S rRNA, and is important in its secondary structure. It is located near the subunit interface in the base of the L7/L12 stalk, and near the tRNA binding site of the peptidyltransferase center. The chain is Large ribosomal subunit protein uL6 from Vesicomyosocius okutanii subsp. Calyptogena okutanii (strain HA).